A 368-amino-acid polypeptide reads, in one-letter code: Chaperone protein DnaJ (368 aa).

Positions 5–69 (DYYEVLGLDK…QKRAQYDRFG (65 aa)) constitute a J domain. The CR-type zinc-finger motif lies at 126 to 208 (GKTETIELEI…CHGSGHVKKK (83 aa)). Zn(2+) is bound by residues cysteine 139, cysteine 142, cysteine 156, cysteine 159, cysteine 182, cysteine 185, cysteine 196, and cysteine 199. CXXCXGXG motif repeat units follow at residues 139-146 (CDTCMGSG), 156-163 (CNRCGGSG), 182-189 (CSQCHGSG), and 196-203 (CPTCHGSG).

This sequence belongs to the DnaJ family. Homodimer. Requires Zn(2+) as cofactor.

It localises to the cytoplasm. Its function is as follows. Participates actively in the response to hyperosmotic and heat shock by preventing the aggregation of stress-denatured proteins and by disaggregating proteins, also in an autonomous, DnaK-independent fashion. Unfolded proteins bind initially to DnaJ; upon interaction with the DnaJ-bound protein, DnaK hydrolyzes its bound ATP, resulting in the formation of a stable complex. GrpE releases ADP from DnaK; ATP binding to DnaK triggers the release of the substrate protein, thus completing the reaction cycle. Several rounds of ATP-dependent interactions between DnaJ, DnaK and GrpE are required for fully efficient folding. Also involved, together with DnaK and GrpE, in the DNA replication of plasmids through activation of initiation proteins. This is Chaperone protein DnaJ from Exiguobacterium sp. (strain ATCC BAA-1283 / AT1b).